The following is a 454-amino-acid chain: Inner membrane permease YgbN (454 aa).

A topological domain (periplasmic) is located at residue Met-1. The chain crosses the membrane as a helical span at residues 2 to 22 (STITLLCIALAGVIMLLLLVI). Topologically, residues 23–27 (KAKVQ) are cytoplasmic. A helical transmembrane segment spans residues 28 to 48 (PFVALLLVSLLVALAAGIPAG). Over 49–52 (EVGK) the chain is Periplasmic. A helical membrane pass occupies residues 53–73 (VMIAGMGGVLGSVTIIIGLGA). The Cytoplasmic segment spans residues 74-108 (MLGRMIEHSGGAESLANYFSRKLGDKRTIAALTLA). The chain crosses the membrane as a helical span at residues 109–129 (AFFLGIPVFFDVGFIILAPII). The Periplasmic segment spans residues 130 to 137 (YGFAKVAK). Residues 138–158 (ISPLKFGLPVAGIMLTVHVAV) form a helical membrane-spanning segment. Residues 159–174 (PPHPGPVAAAGLLHAD) lie on the Cytoplasmic side of the membrane. A helical membrane pass occupies residues 175-195 (IGWLTIIGIAISIPVGVVGYF). The Periplasmic portion of the chain corresponds to 196 to 235 (AAKIINKRQYAMSVEVLEQMQLAPASEEGATKLSDKINPP). Residues 236 to 256 (GVALVTSLIVIPIAIIMAGTV) form a helical membrane-spanning segment. Residues 257–273 (SATLMPPSHPLLGTLQL) lie on the Cytoplasmic side of the membrane. A helical membrane pass occupies residues 274-294 (IGSPMVALMIALVLAFWLLAL). The Periplasmic portion of the chain corresponds to 295–305 (RRGWSLQHTSD). A helical membrane pass occupies residues 306–326 (IMGSALPTAAVVILVTGAGGV). Residues 327–341 (FGKVLVESGVGKALA) lie on the Cytoplasmic side of the membrane. A helical transmembrane segment spans residues 342–362 (NMLQMIDLPLLPAAFIISLAL). The Periplasmic portion of the chain corresponds to 363–383 (RASQGSATVAILTTGGLLSEA). The helical transmembrane segment at 384–404 (VMGLNPIQCVLVTLAACFGGL) threads the bilayer. Topologically, residues 405-433 (GASHINDSGFWIVTKYLGLSVADGLKTWT) are cytoplasmic. Residues 434-454 (VLTTILGFTGFLITWCVWAVI) form a helical membrane-spanning segment.

The protein belongs to the GntP permease family.

It localises to the cell inner membrane. The polypeptide is Inner membrane permease YgbN (ygbN) (Escherichia coli (strain K12)).